Reading from the N-terminus, the 408-residue chain is Multidrug resistance protein MdtG (408 aa).

11 consecutive transmembrane segments (helical) span residues 16 to 36, 58 to 78, 92 to 112, 115 to 135, 146 to 166, 173 to 193, 224 to 244, 253 to 273, 290 to 310, 319 to 339, and 378 to 398; these read LIVA…VMPF, IVFS…GGLA, LGMG…QFLI, ALLG…ATQV, TLST…GLLA, PVFF…LLCI, LFVT…ILTL, VGNI…AALL, ILIA…FVQT, FLLG…LVYN, and AVFL…WNSL.

This sequence belongs to the major facilitator superfamily. DHA1 family. MdtG (TC 2.A.1.2.20) subfamily.

The protein resides in the cell inner membrane. Functionally, confers resistance to fosfomycin and deoxycholate. The polypeptide is Multidrug resistance protein MdtG (Escherichia fergusonii (strain ATCC 35469 / DSM 13698 / CCUG 18766 / IAM 14443 / JCM 21226 / LMG 7866 / NBRC 102419 / NCTC 12128 / CDC 0568-73)).